Reading from the N-terminus, the 715-residue chain is Polyribonucleotide nucleotidyltransferase (715 aa).

The Mg(2+) site is built by Asp-489 and Asp-495. Positions Pro-556–Ile-615 constitute a KH domain. The 69-residue stretch at Gly-625 to Arg-693 folds into the S1 motif domain.

The protein belongs to the polyribonucleotide nucleotidyltransferase family. Mg(2+) serves as cofactor.

Its subcellular location is the cytoplasm. It carries out the reaction RNA(n+1) + phosphate = RNA(n) + a ribonucleoside 5'-diphosphate. Involved in mRNA degradation. Catalyzes the phosphorolysis of single-stranded polyribonucleotides processively in the 3'- to 5'-direction. The protein is Polyribonucleotide nucleotidyltransferase of Beijerinckia indica subsp. indica (strain ATCC 9039 / DSM 1715 / NCIMB 8712).